Here is a 445-residue protein sequence, read N- to C-terminus: Exodeoxyribonuclease 7 large subunit (445 aa).

It belongs to the XseA family. In terms of assembly, heterooligomer composed of large and small subunits.

The protein localises to the cytoplasm. The catalysed reaction is Exonucleolytic cleavage in either 5'- to 3'- or 3'- to 5'-direction to yield nucleoside 5'-phosphates.. Bidirectionally degrades single-stranded DNA into large acid-insoluble oligonucleotides, which are then degraded further into small acid-soluble oligonucleotides. The protein is Exodeoxyribonuclease 7 large subunit of Shewanella oneidensis (strain ATCC 700550 / JCM 31522 / CIP 106686 / LMG 19005 / NCIMB 14063 / MR-1).